The chain runs to 116 residues: Large ribosomal subunit protein bL17 (116 aa).

It belongs to the bacterial ribosomal protein bL17 family. Part of the 50S ribosomal subunit. Contacts protein L32.

In Microcystis aeruginosa (strain NIES-843 / IAM M-2473), this protein is Large ribosomal subunit protein bL17.